Reading from the N-terminus, the 105-residue chain is uncharacterized protein (105 aa).

Disordered regions lie at residues 29–55 (HTRV…TDES) and 72–105 (EQRG…RSGR). The span at 72 to 81 (EQRGDRRAVR) shows a compositional bias: basic and acidic residues.

This is an uncharacterized protein from Streptomyces coelicolor (strain ATCC BAA-471 / A3(2) / M145).